Reading from the N-terminus, the 36-residue chain is Histone H1-like protein EM5 (36 aa).

One can recognise an H15 domain in the interval 1-36; it reads MITAAVGALKERGGSSRQAILKYIQANFKVQANPAA.

It belongs to the histone H1/H5 family. Sperm.

It localises to the nucleus. It is found in the chromosome. The polypeptide is Histone H1-like protein EM5 (Ensis minor (Razor shell)).